We begin with the raw amino-acid sequence, 375 residues long: Glutamate 5-kinase (375 aa).

Residue K13 coordinates ATP. Substrate contacts are provided by S54, D141, and N153. ATP is bound by residues 173–174 and 216–222; these read TD and TGGMATK. Residues 281–359 form the PUA domain; the sequence is TGKIFIDAGA…EAIAAVLGYV (79 aa).

Belongs to the glutamate 5-kinase family.

It localises to the cytoplasm. The enzyme catalyses L-glutamate + ATP = L-glutamyl 5-phosphate + ADP. Its pathway is amino-acid biosynthesis; L-proline biosynthesis; L-glutamate 5-semialdehyde from L-glutamate: step 1/2. Its function is as follows. Catalyzes the transfer of a phosphate group to glutamate to form L-glutamate 5-phosphate. In Synechocystis sp. (strain ATCC 27184 / PCC 6803 / Kazusa), this protein is Glutamate 5-kinase.